Reading from the N-terminus, the 148-residue chain is Putative nickel-responsive regulator (148 aa).

Residues H88, H99, H101, and C107 each contribute to the Ni(2+) site.

The protein belongs to the transcriptional regulatory CopG/NikR family. The cofactor is Ni(2+).

Its function is as follows. Transcriptional regulator. In Helicobacter pylori (strain G27), this protein is Putative nickel-responsive regulator.